The sequence spans 383 residues: Acetylornithine deacetylase (383 aa).

A Zn(2+)-binding site is contributed by H80. D82 is a catalytic residue. D112 contacts Zn(2+). E144 is a catalytic residue. E145, E169, and H355 together coordinate Zn(2+).

Belongs to the peptidase M20A family. ArgE subfamily. Homodimer. The cofactor is Zn(2+). Requires Co(2+) as cofactor. It depends on glutathione as a cofactor.

The protein localises to the cytoplasm. It carries out the reaction N(2)-acetyl-L-ornithine + H2O = L-ornithine + acetate. It functions in the pathway amino-acid biosynthesis; L-arginine biosynthesis; L-ornithine from N(2)-acetyl-L-ornithine (linear): step 1/1. Its function is as follows. Catalyzes the hydrolysis of the amide bond of N(2)-acetylated L-amino acids. Cleaves the acetyl group from N-acetyl-L-ornithine to form L-ornithine, an intermediate in L-arginine biosynthesis pathway, and a branchpoint in the synthesis of polyamines. The protein is Acetylornithine deacetylase of Escherichia coli O9:H4 (strain HS).